Here is a 274-residue protein sequence, read N- to C-terminus: Tyrosinase (274 aa).

Cu cation-binding residues include His-38, His-54, His-63, His-190, His-194, and His-216.

Belongs to the tyrosinase family. The cofactor is Cu(2+).

It catalyses the reaction 2 L-dopa + O2 = 2 L-dopaquinone + 2 H2O. The enzyme catalyses L-tyrosine + O2 = L-dopaquinone + H2O. Its function is as follows. This is a copper-containing oxidase that functions in the formation of pigments such as melanins and other polyphenolic compounds. The protein is Tyrosinase (melC2) of Streptomyces glaucescens.